A 187-amino-acid polypeptide reads, in one-letter code: Crossover junction endodeoxyribonuclease RuvC (187 aa).

Active-site residues include aspartate 7, glutamate 67, and aspartate 140. Aspartate 7, glutamate 67, and aspartate 140 together coordinate Mg(2+).

Belongs to the RuvC family. As to quaternary structure, homodimer which binds Holliday junction (HJ) DNA. The HJ becomes 2-fold symmetrical on binding to RuvC with unstacked arms; it has a different conformation from HJ DNA in complex with RuvA. In the full resolvosome a probable DNA-RuvA(4)-RuvB(12)-RuvC(2) complex forms which resolves the HJ. Mg(2+) serves as cofactor.

The protein resides in the cytoplasm. The catalysed reaction is Endonucleolytic cleavage at a junction such as a reciprocal single-stranded crossover between two homologous DNA duplexes (Holliday junction).. In terms of biological role, the RuvA-RuvB-RuvC complex processes Holliday junction (HJ) DNA during genetic recombination and DNA repair. Endonuclease that resolves HJ intermediates. Cleaves cruciform DNA by making single-stranded nicks across the HJ at symmetrical positions within the homologous arms, yielding a 5'-phosphate and a 3'-hydroxyl group; requires a central core of homology in the junction. The consensus cleavage sequence is 5'-(A/T)TT(C/G)-3'. Cleavage occurs on the 3'-side of the TT dinucleotide at the point of strand exchange. HJ branch migration catalyzed by RuvA-RuvB allows RuvC to scan DNA until it finds its consensus sequence, where it cleaves and resolves the cruciform DNA. This Chlorobaculum parvum (strain DSM 263 / NCIMB 8327) (Chlorobium vibrioforme subsp. thiosulfatophilum) protein is Crossover junction endodeoxyribonuclease RuvC.